We begin with the raw amino-acid sequence, 210 residues long: SAP domain-containing ribonucleoprotein (210 aa).

The residue at position 2 (Ala2) is an N-acetylalanine. One can recognise an SAP domain in the interval 8–42; it reads LHKLKLAELKQECLARGLETKGIKQDLIHRLQAYL. Lys10 is modified (N6-acetyllysine). Over residues 45 to 64 the composition is skewed to acidic residues; the sequence is HAEEEANEEDVLGDETEEEE. The segment at 45–86 is disordered; sequence HAEEEANEEDVLGDETEEEETKPIELPVKEEEPPEKTVDVAA. Basic and acidic residues predominate over residues 65-86; it reads TKPIELPVKEEEPPEKTVDVAA. Lys142 is subject to N6-acetyllysine. Positions 161–210 are disordered; that stretch reads VSSISRKSEDDEKLKKRKERFGIVTSSAGTGTTEDTEAKKRKRAERFGIA. At Ser163 the chain carries Phosphoserine. Residues 184-193 are compositionally biased toward polar residues; it reads VTSSAGTGTT.

The protein belongs to the SAP domain-containing ribonucleoprotein family. As to quaternary structure, interacts with DDX39A. Interacts with FUS. Interacts (via the C-terminal domain) with DDX39B; the interaction is direct and facilitates RNA binding of DDX39B. Component of the transcription/export (TREX) complex at least composed of ALYREF/THOC4, DDX39B, SARNP/CIP29, CHTOP and the THO subcomplex; TREX seems to have dynamic structure involving ATP-dependent remodeling; in the complex interacts directly with DDX39B in a ATP-dependent manner which bridges it to ALYREF/THOC4. In terms of tissue distribution, low expression in spleen, liver, pancreas, testis, thymus, heart, and kidney. Increased levels are seen in hepatocellular carcinoma and pancreatic adenocarcinoma.

It is found in the nucleus. The protein resides in the nucleus speckle. In terms of biological role, binds both single-stranded and double-stranded DNA with higher affinity for the single-stranded form. Specifically binds to scaffold/matrix attachment region DNA. Also binds single-stranded RNA. Enhances RNA unwinding activity of DDX39A. May participate in important transcriptional or translational control of cell growth, metabolism and carcinogenesis. Component of the TREX complex which is thought to couple mRNA transcription, processing and nuclear export, and specifically associates with spliced mRNA and not with unspliced pre-mRNA. The TREX complex is recruited to spliced mRNAs by a transcription-independent mechanism, binds to mRNA upstream of the exon-junction complex (EJC) and is recruited in a splicing- and cap-dependent manner to a region near the 5' end of the mRNA where it functions in mRNA export to the cytoplasm via the TAP/NXF1 pathway. Associates with DDX39B, which facilitates RNA binding of DDX39B and likely plays a role in mRNA export. In Homo sapiens (Human), this protein is SAP domain-containing ribonucleoprotein (SARNP).